A 199-amino-acid polypeptide reads, in one-letter code: MSYYSTSVAKLIEELSKLPGIGPKTAQRLAFFIINMPLDEVRSLSQAIIEAKEKLRYCKICFNITDKEVCDICSDENRDHSTICVVSHPMDVVAMEKVKEYKGVYHVLHGVISPIEGVGPEDIRIKELLERVRDGSVKEVILATNPDIEGEATAMYIAKLLKPFGVKVTRIAHGIPVGGDLEYTDVVTLSKALEGRREV.

Residues 58-73 (CKICFNITDKEVCDIC) form a C4-type zinc finger. A Toprim domain is found at 81 to 176 (STICVVSHPM…KVTRIAHGIP (96 aa)).

The protein belongs to the RecR family.

Functionally, may play a role in DNA repair. It seems to be involved in an RecBC-independent recombinational process of DNA repair. It may act with RecF and RecO. This chain is Recombination protein RecR, found in Caldanaerobacter subterraneus subsp. tengcongensis (strain DSM 15242 / JCM 11007 / NBRC 100824 / MB4) (Thermoanaerobacter tengcongensis).